The primary structure comprises 89 residues: Diphthamide biosynthesis protein 3 (89 aa).

The DPH-type MB domain maps to 5 to 61 (FYDEIELEDMSYDDEKDVFHYPCPCGDRFEITRQQLKDAEDVARCPSCSLIIRVVFD). Fe cation contacts are provided by Cys27, Cys29, Cys49, and Cys52.

The protein belongs to the DPH3 family. Component of the 2-(3-amino-3-carboxypropyl)histidine synthase complex composed of DPH1, DPH2, DPH3 and a NADH-dependent reductase, predominantly CBR1. It depends on Fe(2+) as a cofactor.

The protein resides in the cytoplasm. It is found in the nucleus. It carries out the reaction [3Fe-4S](1+)-[protein] + Fe(2+)-[Dph3] = [3Fe-4S](0)-[protein] + Fe(3+)-[Dph3]. It catalyses the reaction 2 [3Fe-4S](0)-[protein] + 2 Fe(2+)-[Dph3] + NADH = 2 [4Fe-4S](1+)-[protein] + 2 [Dph3] + NAD(+) + H(+). It functions in the pathway protein modification; peptidyl-diphthamide biosynthesis. In terms of biological role, required for the first step of diphthamide biosynthesis, a post-translational modification of histidine which occurs in elongation factor 2. DPH1 and DPH2 transfer a 3-amino-3-carboxypropyl (ACP) group from S-adenosyl-L-methionine (SAM) to a histidine residue, the reaction is assisted by a reduction system comprising KTI11/DPH3 and a NADH-dependent reductase, predominantly CBR1. Acts as an electron donor to reduce the Fe-S cluster in DPH1-DPH2 keeping the [4Fe-4S] clusters in the active and reduced state. Restores iron to DPH1-DPH2 iron-sulfur clusters which have degraded from [4Fe-4S] to [3Fe-4S] by donating an iron atom to reform [4Fe-4S] clusters, in a manner dependent on the presence of elongation factor 2 and SAM. Associates with the elongator complex and is required for tRNA Wobble base modifications mediated by the elongator complex. The elongator complex is required for multiple tRNA modifications, including mcm5U (5-methoxycarbonylmethyl uridine), mcm5s 2U (5-methoxycarbonylmethyl-2-thiouridine), and ncm5U (5-carbamoylmethyl uridine). This chain is Diphthamide biosynthesis protein 3 (DPH3), found in Mycosarcoma maydis (Corn smut fungus).